The chain runs to 274 residues: Urease accessory protein UreD (274 aa).

Belongs to the UreD family. In terms of assembly, ureD, UreF and UreG form a complex that acts as a GTP-hydrolysis-dependent molecular chaperone, activating the urease apoprotein by helping to assemble the nickel containing metallocenter of UreC. The UreE protein probably delivers the nickel.

The protein localises to the cytoplasm. In terms of biological role, required for maturation of urease via the functional incorporation of the urease nickel metallocenter. The sequence is that of Urease accessory protein UreD from Thermosynechococcus vestitus (strain NIES-2133 / IAM M-273 / BP-1).